Consider the following 1006-residue polypeptide: Multiple C2 domain and transmembrane region protein 9 (1006 aa).

Residues methionine 1–tyrosine 108 enclose the C2 1 domain. Residues valine 135 to lysine 156 form a disordered region. C2 domains are found at residues arginine 251–tyrosine 371, serine 411–valine 536, and asparagine 579–tyrosine 704. Aspartate 284, aspartate 290, aspartate 337, aspartate 339, and aspartate 344 together coordinate Ca(2+). 2 consecutive transmembrane segments (helical) span residues methionine 842 to glycine 862 and alanine 946 to phenylalanine 966.

It belongs to the MCTP family. Ca(2+) serves as cofactor. As to expression, expressed in incipient leaf primordia and roots meristems. Observed in flowers.

The protein resides in the cell membrane. It localises to the cytoplasm. In terms of biological role, may function as a signaling molecule by regulating the trafficking of other regulators. The protein is Multiple C2 domain and transmembrane region protein 9 of Arabidopsis thaliana (Mouse-ear cress).